We begin with the raw amino-acid sequence, 436 residues long: UPF0597 protein YhaM (436 aa).

This sequence belongs to the UPF0597 family.

This is UPF0597 protein YhaM from Escherichia coli (strain SE11).